The chain runs to 679 residues: Patatin-like phospholipase 1 (679 aa).

Disordered regions lie at residues 19-45 (FSDD…NAEN) and 155-194 (GEYE…NYNS). Polar residues-rich tracts occupy residues 35–45 (YSGSETQNAEN) and 162–176 (TSSY…NTVG). Positions 177-188 (SEKEETENKNEE) are enriched in basic and acidic residues. In terms of domain architecture, PNPLA spans 338 to 544 (LSLDGGGILT…KASNPALIAL (207 aa)). Residues 381-385 (GTSAG) carry the GXSXG motif. The Nucleophile role is filled by S383. D531 serves as the catalytic Proton acceptor. The short motif at 531-533 (DGA) is the DGA/G element.

This sequence belongs to the patatin family.

The protein localises to the cytoplasm. The catalysed reaction is a 1,2-diacyl-sn-glycero-3-phosphocholine + H2O = a 1-acyl-sn-glycero-3-phosphocholine + a fatty acid + H(+). It carries out the reaction 1,2-dihexadecanoyl-sn-glycero-3-phosphocholine + H2O = 1-hexadecanoyl-sn-glycero-3-phosphocholine + hexadecanoate + H(+). Functionally, hydrolyzes the ester bond of the fatty acyl group attached at the sn-2 position of phospholipids such as phosphatidylcholine. Involved in gametogenesis; however, it is not clear whether it is involved in gametocytes development in host erythrocytes or in gametocyte activation in the mosquito midgut. Involved in gametocyte development in host erythrocytes; however, not involved in gametocytes activation including male gamete exflagellation. Involved in the rounding up of gametocytes following activation in the mosquito midgut; however, not required for gametocyte development in host erythrocytes. Required for exflagellation of activated male gametocytes. Involved in gametocytes egress from host erythrocytes by promoting the relocalization of perforin-like protein PLP2-containing vesicles to the periphery of gametocytes; PLP2 secretion is required for permeabilization of the erythrocyte membrane and thus, promotes gametocyte egress. Dispensable for asexual blood stage development. The chain is Patatin-like phospholipase 1 from Plasmodium falciparum (isolate NF54).